The chain runs to 818 residues: Beta-glucosidase (818 aa).

The active site involves Asp222. The PA14 domain occupies 386–538 (VFSGEMTVEY…GDAGIAEAVE (153 aa)).

The protein belongs to the glycosyl hydrolase 3 family.

Its subcellular location is the cytoplasm. The enzyme catalyses Hydrolysis of terminal, non-reducing beta-D-glucosyl residues with release of beta-D-glucose.. Functionally, involved in modifying a vir-inducing plant signal molecule. Hydrolyzes coniferin but not cellobiose. The polypeptide is Beta-glucosidase (cbg-1) (Rhizobium radiobacter (Agrobacterium tumefaciens)).